Consider the following 139-residue polypeptide: ATP synthase epsilon chain (139 aa).

It belongs to the ATPase epsilon chain family. As to quaternary structure, F-type ATPases have 2 components, CF(1) - the catalytic core - and CF(0) - the membrane proton channel. CF(1) has five subunits: alpha(3), beta(3), gamma(1), delta(1), epsilon(1). CF(0) has three main subunits: a, b and c.

Its subcellular location is the cell membrane. Produces ATP from ADP in the presence of a proton gradient across the membrane. This Streptococcus pneumoniae serotype 2 (strain D39 / NCTC 7466) protein is ATP synthase epsilon chain.